The following is a 459-amino-acid chain: UDP-glycosyltransferase 78D3 (459 aa).

UDP-alpha-D-glucose-binding positions include 338–340, 355–363, and 377–380; these read APQ, HGGWNSVLE, and FGDH.

It belongs to the UDP-glycosyltransferase family.

In terms of biological role, possesses low quercetin 3-O-glucosyltransferase activity in vitro. This Arabidopsis thaliana (Mouse-ear cress) protein is UDP-glycosyltransferase 78D3 (UGT78D3).